The following is a 226-amino-acid chain: V-type proton ATPase subunit E (226 aa).

This sequence belongs to the V-ATPase E subunit family. In terms of assembly, V-ATPase is a heteromultimeric enzyme made up of two complexes: the ATP-hydrolytic V1 complex and the proton translocation V0 complex. The V1 complex consists of three catalytic AB heterodimers that form a heterohexamer, three peripheral stalks each consisting of EG heterodimers, one central rotor including subunits D and F, and the regulatory subunits C and H. The proton translocation complex V0 consists of the proton transport subunit a, a ring of proteolipid subunits c9c'', rotary subunit d, subunits e and f, and the accessory subunits VhaAC45 and ATP6AP2.

In terms of biological role, subunit of the V1 complex of vacuolar(H+)-ATPase (V-ATPase), a multisubunit enzyme composed of a peripheral complex (V1) that hydrolyzes ATP and a membrane integral complex (V0) that translocates protons. V-ATPase is responsible for acidifying and maintaining the pH of intracellular compartments and in some cell types, is targeted to the plasma membrane, where it is responsible for acidifying the extracellular environment. The polypeptide is V-type proton ATPase subunit E (VHA26) (Manduca sexta (Tobacco hawkmoth)).